Consider the following 905-residue polypeptide: MKLFVGEGNPQGVKVLAAAALWAQHVQIDRLQQEEKIVPFMSQPRLPVLDLENGNYLFLSNAICRYFYLSSGHDMCDLSNQWLEWEAAELQPALSAALYAHVVQGKKKEDVMATISASLKHLDQSLAGKSSPYLIKDALTVVDIVVWGSIYPLIVDASNLPEEMASLKRWFQNVSQLEQCQKAASSLLKDKGSSVFKPFLQKQPAPITPPGKSVCKEQEGEDMPSLSEEDIQAAAEAWAKGLTGASKPKQRPHPILPVEGEKNVLITSALPYVNNVPHLGNIIGSVLSADVFARYCRLRNWNTLYICGTDEYGTATETKAMEEGLTPQQICDKYNAIHTAIYQWFNISFDYFGRTTTQHQTTISQDIFHRLLEREFLLTDTVEQLRCEKCQRFLADRFVEGICPFCNYEEARGDQCDKCGKLINAVELKKPQCKICKQSPVIKSSKHLFLDLPKLEKRLEQWLEQSFSTGDWTSNARFITRSWIRDGLKPRCITRDLKWGTPVPLDGFRDKVFYVWFDAPIGYISITANYTDQWEKWWKSPQQVQLYNFMAKDNVPFHSVVFPSCLLGAEDNYTLVNHLVATEYLNYEDGKFSKSRGVGVFGDMAKDTGIPADIWRFYLLYVRPEGQDSAFSWSDLMLKNNSELLNNLGNFVNRAGMFVQKFFNGCVPEMELLSEDKRLLAQVAAELQQYNLLLEKVRIRDALRCILNISRHGNQYIQVNEPWKCIKGNQQEQKRAGTVTGVAVNMAALLSIMLHPYMPTISSVIQEQLLMPQESKVLTTDFCCCLQSGHQIGNVSPLFQKLENDQIESLRKRFGGGQVKTESKVSPSQEAPEQQAPKASGPERVKELMQELEKQGNHVRELKGKKAEKSVIDPEVQKLLALKKELALAEGKSPDPPTQKGKKKK.

The 75-residue stretch at 1–75 (MKLFVGEGNP…YFYLSSGHDM (75 aa)) folds into the GST N-terminal domain. Residues 72 to 199 (GHDMCDLSNQ…DKGSSVFKPF (128 aa)) enclose the GST C-terminal domain. Positions 271–281 (PYVNNVPHLGN) match the 'HIGH' region motif. The short motif at 591–595 (KFSKS) is the 'KMSKS' region element. Lys-594 is a binding site for ATP. Disordered stretches follow at residues 813–874 (RFGG…VIDP) and 886–905 (LALA…KKKK). The segment covering 841–874 (GPERVKELMQELEKQGNHVRELKGKKAEKSVIDP) has biased composition (basic and acidic residues). The WHEP-TRS domain maps to 844–900 (RVKELMQELEKQGNHVRELKGKKAEKSVIDPEVQKLLALKKELALAEGKSPDPPTQK).

The protein belongs to the class-I aminoacyl-tRNA synthetase family. As to quaternary structure, monomer. Part of a multisubunit complex that groups tRNA ligases for Arg (RARS1), Asp (DARS1), Gln (QARS1), Ile (IARS1), Leu (LARS1), Lys (KARS1), Met (MARS1) the bifunctional ligase for Glu and Pro (EPRS1) and the auxiliary subunits AIMP1/p43, AIMP2/p38 and EEF1E1/p18.

It is found in the cytoplasm. The protein resides in the cytosol. It localises to the nucleus. The protein localises to the nucleolus. The catalysed reaction is tRNA(Met) + L-methionine + ATP = L-methionyl-tRNA(Met) + AMP + diphosphate. Catalyzes the specific attachment of an amino acid to its cognate tRNA in a 2 step reaction: the amino acid (AA) is first activated by ATP to form AA-AMP and then transferred to the acceptor end of the tRNA. Plays a role in the synthesis of ribosomal RNA in the nucleolus. This is Methionine--tRNA ligase, cytoplasmic (mars1) from Xenopus laevis (African clawed frog).